The chain runs to 191 residues: Reticulon-like protein B15 (191 aa).

The Reticulon domain maps to 13-191 (VADLCLWKDK…SKIPRAPKVE (179 aa)). 3 helical membrane-spanning segments follow: residues 23–43 (INSG…EFME), 47–67 (VPLL…WAKF), and 122–142 (VAII…YICL).

It localises to the endoplasmic reticulum membrane. This chain is Reticulon-like protein B15 (RTNLB15), found in Arabidopsis thaliana (Mouse-ear cress).